The following is a 161-amino-acid chain: 2-C-methyl-D-erythritol 2,4-cyclodiphosphate synthase (161 aa).

A divalent metal cation is bound by residues Asp10 and His12. Residues 10–12 (DVH) and 36–37 (HS) contribute to the 4-CDP-2-C-methyl-D-erythritol 2-phosphate site. His44 contacts a divalent metal cation. 4-CDP-2-C-methyl-D-erythritol 2-phosphate contacts are provided by residues 58 to 60 (DIG), 63 to 67 (FPDTD), 102 to 108 (AQAPKMA), 134 to 137 (TTTE), Phe141, and Arg144.

This sequence belongs to the IspF family. As to quaternary structure, homotrimer. A divalent metal cation serves as cofactor.

It catalyses the reaction 4-CDP-2-C-methyl-D-erythritol 2-phosphate = 2-C-methyl-D-erythritol 2,4-cyclic diphosphate + CMP. The protein operates within isoprenoid biosynthesis; isopentenyl diphosphate biosynthesis via DXP pathway; isopentenyl diphosphate from 1-deoxy-D-xylulose 5-phosphate: step 4/6. Its function is as follows. Involved in the biosynthesis of isopentenyl diphosphate (IPP) and dimethylallyl diphosphate (DMAPP), two major building blocks of isoprenoid compounds. Catalyzes the conversion of 4-diphosphocytidyl-2-C-methyl-D-erythritol 2-phosphate (CDP-ME2P) to 2-C-methyl-D-erythritol 2,4-cyclodiphosphate (ME-CPP) with a corresponding release of cytidine 5-monophosphate (CMP). The chain is 2-C-methyl-D-erythritol 2,4-cyclodiphosphate synthase from Shewanella baltica (strain OS155 / ATCC BAA-1091).